A 162-amino-acid chain; its full sequence is Auxin-responsive protein SAUR36 (162 aa).

The protein belongs to the ARG7 family. As to expression, expressed in embryo, endosperm, growing hypocotyls and shoot apical meristems.

Functionally, acts a positive regulator of leaf senescence and may mediate auxin-induced leaf senescence. Plays a role in the regulation of seed germination by gibberellins and abscisic acid (ABA). Plays a role in the regulation of light-dependent hypocotyl elongation. In Arabidopsis thaliana (Mouse-ear cress), this protein is Auxin-responsive protein SAUR36.